The sequence spans 352 residues: Cyclin-dependent kinase-like 1 (352 aa).

The Protein kinase domain occupies 4–287 (YEKIGKIGEG…CEQLLQHPYF (284 aa)). ATP-binding positions include 10–18 (IGEGSYGVV) and Lys33. Residues 45 to 51 (KKIALRE) carry the [NKR]KIAxRE motif. The active-site Proton acceptor is Asp126.

It belongs to the protein kinase superfamily. CMGC Ser/Thr protein kinase family. CDC2/CDKX subfamily.

Its subcellular location is the cytoplasm. The protein resides in the nucleus. It carries out the reaction L-seryl-[protein] + ATP = O-phospho-L-seryl-[protein] + ADP + H(+). It catalyses the reaction L-threonyl-[protein] + ATP = O-phospho-L-threonyl-[protein] + ADP + H(+). This Mus musculus (Mouse) protein is Cyclin-dependent kinase-like 1.